The chain runs to 229 residues: HTH-type transcriptional regulator HbdR (229 aa).

Positions 20 to 80 (EERRHQIISA…LTLKNVLDTY (61 aa)) constitute an HTH tetR-type domain. Residues 43–62 (TILQIAREAKVSTGLIYQYF) constitute a DNA-binding region (H-T-H motif).

Homodimer in solution.

With respect to regulation, activity is regulated by the effector molecules 3-hydroxybenzoyl-CoA and benzoyl-CoA, which bind to HbdR, alleviating its repression on the three target promoters and inducing the expression of the hbd genes. Functionally, transcriptional regulator that controls the expression of the hbd cluster, which contains three catabolic operons and is responsible for the anaerobic degradation of 3-hydroxybenzoate. HbdR suppresses the activity of the three catabolic promoters (PhbdN, PhbdE and PhbdH) by binding to a conserved palindromic operator box. In addition, it slightly increases activity of its own promoter (PhbdR). The HbdR-mediated repression of hbd genes may play a crucial biological role in maintaining requisite hydroxybenzoate levels in the cell. The sequence is that of HTH-type transcriptional regulator HbdR from Aromatoleum sp. (strain CIB) (Azoarcus sp. (strain CIB)).